The primary structure comprises 126 residues: MKMTKLATLFLTATLSLASGAALAADSGAQTNNGQANAAADAGQVAPDARENVAPNNVDNNGVNTGSGGTMLHSDGSSMNNDGMTKDEEHKNTMCKDGRCPDINKKVQTGDGINNDVDTKTDGTTQ.

A signal peptide spans Met1–Ala24. Low complexity predominate over residues Ser27 to Pro47. Positions Ser27–Gln126 are disordered. A compositionally biased stretch (polar residues) spans Ala54–Asn64. 2 stretches are compositionally biased toward basic and acidic residues: residues Met84–Lys105 and Val117–Gln126.

This is an uncharacterized protein from Shigella flexneri.